The sequence spans 364 residues: Growth hormone secretagogue receptor type 1 (364 aa).

The Extracellular portion of the chain corresponds to 1 to 40 (MWNATPSEEPEPNVTLDLDWDASPGNDSLSDELLPLFPAP). N-linked (GlcNAc...) asparagine glycosylation is found at Asn13 and Asn26. The helical transmembrane segment at 41–66 (LLAGVTATCVALFVVGISGNLLTMLV) threads the bilayer. Residues 67-72 (VSRFRE) lie on the Cytoplasmic side of the membrane. A helical transmembrane segment spans residues 73–96 (LRTTTNLYLSSMAFSDLLIFLCMP). The Extracellular segment spans residues 97-117 (LDLVRLWQYRPWNFGDLLCKL). An intrachain disulfide couples Cys115 to Cys197. The chain crosses the membrane as a helical span at residues 118 to 139 (FQFVSESCTYATVLTITALSVE). The Cytoplasmic segment spans residues 140 to 162 (RYFAICFPLRAKVVVTKGRVKLV). A helical membrane pass occupies residues 163–183 (ILVIWAVAFCSAGPIFVLVGV). Residues 184-211 (EHENGTDPRDTNECRATEFAVRSGLLTV) are Extracellular-facing. A glycan (N-linked (GlcNAc...) asparagine) is linked at Asn187. The chain crosses the membrane as a helical span at residues 212–235 (MVWVSSVFFFLPVFCLTVLYSLIG). The Cytoplasmic segment spans residues 236 to 263 (RKLWRRRGDAAVGSSLRDQNHKQTVKML). A helical membrane pass occupies residues 264 to 285 (AVVVFAFILCWLPFHVGRYLFS). Residues 286 to 302 (KSFEPGSLEIAQISQYC) are Extracellular-facing. The chain crosses the membrane as a helical span at residues 303 to 326 (NLVSFVLFYLSAAINPILYNIMSK). Residues 327 to 364 (KYRVAVFKLLGFESFSQRKLSTLKDESSRAWTKSSINT) are Cytoplasmic-facing.

This sequence belongs to the G-protein coupled receptor 1 family.

It is found in the cell membrane. Receptor for ghrelin, coupled to G-alpha-11 proteins. Stimulates growth hormone secretion. Also binds other growth hormone releasing peptides (GHRP) (e.g. Met-enkephalin and GHRP-6) as well as non-peptide, low molecular weight secretagogues (e.g. L-692,429, MK-0677, adenosine). This is Growth hormone secretagogue receptor type 1 (Ghsr) from Mus musculus (Mouse).